A 337-amino-acid chain; its full sequence is tRNA N6-adenosine threonylcarbamoyltransferase (337 aa).

Positions 111 and 115 each coordinate Fe cation. Substrate is bound by residues 134–138, D167, G180, and N272; that span reads LVSGG. D300 is a binding site for Fe cation.

This sequence belongs to the KAE1 / TsaD family. It depends on Fe(2+) as a cofactor.

Its subcellular location is the cytoplasm. It carries out the reaction L-threonylcarbamoyladenylate + adenosine(37) in tRNA = N(6)-L-threonylcarbamoyladenosine(37) in tRNA + AMP + H(+). Required for the formation of a threonylcarbamoyl group on adenosine at position 37 (t(6)A37) in tRNAs that read codons beginning with adenine. Is involved in the transfer of the threonylcarbamoyl moiety of threonylcarbamoyl-AMP (TC-AMP) to the N6 group of A37, together with TsaE and TsaB. TsaD likely plays a direct catalytic role in this reaction. This Salmonella typhi protein is tRNA N6-adenosine threonylcarbamoyltransferase.